The primary structure comprises 334 residues: Mevalonate kinase (334 aa).

Position 110-120 (110-120) interacts with ATP; that stretch reads PVGAGLGSSAA. D161 serves as the catalytic Proton acceptor.

This sequence belongs to the GHMP kinase family. Mevalonate kinase subfamily. Homodimer. Mg(2+) serves as cofactor.

Its subcellular location is the cytoplasm. The catalysed reaction is (R)-mevalonate + ATP = (R)-5-phosphomevalonate + ADP + H(+). It functions in the pathway isoprenoid biosynthesis; isopentenyl diphosphate biosynthesis via mevalonate pathway; isopentenyl diphosphate from (R)-mevalonate: step 1/3. Functionally, catalyzes the phosphorylation of (R)-mevalonate (MVA) to (R)-mevalonate 5-phosphate (MVAP). Functions in the mevalonate (MVA) pathway leading to isopentenyl diphosphate (IPP), a key precursor for the biosynthesis of isoprenoid compounds such as archaeal membrane lipids. This chain is Mevalonate kinase, found in Thermococcus onnurineus (strain NA1).